The primary structure comprises 284 residues: Hypoxanthine-guanine phosphoribosyltransferase (284 aa).

GMP is bound by residues Lys129, 194–202 (EDIIDTGKT), Lys226, and Asp253. The active-site Proton acceptor is Asp198. A Mg(2+)-binding site is contributed by Asp253.

It belongs to the purine/pyrimidine phosphoribosyltransferase family. In terms of assembly, homotetramer. It depends on Mg(2+) as a cofactor.

It localises to the cytoplasm. It carries out the reaction IMP + diphosphate = hypoxanthine + 5-phospho-alpha-D-ribose 1-diphosphate. The catalysed reaction is GMP + diphosphate = guanine + 5-phospho-alpha-D-ribose 1-diphosphate. It participates in purine metabolism; IMP biosynthesis via salvage pathway; IMP from hypoxanthine: step 1/1. In terms of biological role, converts guanine to guanosine monophosphate, and hypoxanthine to inosine monophosphate. Transfers the 5-phosphoribosyl group from 5-phosphoribosylpyrophosphate onto the purine. Plays a central role in the generation of purine nucleotides through the purine salvage pathway. This Schistosoma mansoni (Blood fluke) protein is Hypoxanthine-guanine phosphoribosyltransferase (HGPRT).